We begin with the raw amino-acid sequence, 200 residues long: Putative vacuolar protein sorting-associated protein 24 homolog 2 (200 aa).

The stretch at 2-23 (TIKSLLSDIEREERNVHKAIKD) forms a coiled coil.

Belongs to the SNF7 family. In terms of assembly, component of the endosomal sorting required for transport complex III (ESCRT-III), composed at least of VPS2, VPS20, VPS24 and VPS32.

It localises to the endosome. Functionally, component of the ESCRT-III complex, which is required for multivesicular bodies (MVBs) formation and sorting of endosomal cargo proteins into MVBs. The ESCRT-III complex is probably involved in the concentration of MVB cargo. The sequence is that of Putative vacuolar protein sorting-associated protein 24 homolog 2 (VPS24-2) from Arabidopsis thaliana (Mouse-ear cress).